Here is a 321-residue protein sequence, read N- to C-terminus: Lipoyl synthase (321 aa).

C68, C73, C79, C94, C98, C101, and S308 together coordinate [4Fe-4S] cluster. The Radical SAM core domain occupies 80–297 (FNHGTATFMI…KEIALELGFT (218 aa)).

Belongs to the radical SAM superfamily. Lipoyl synthase family. The cofactor is [4Fe-4S] cluster.

The protein localises to the cytoplasm. It carries out the reaction [[Fe-S] cluster scaffold protein carrying a second [4Fe-4S](2+) cluster] + N(6)-octanoyl-L-lysyl-[protein] + 2 oxidized [2Fe-2S]-[ferredoxin] + 2 S-adenosyl-L-methionine + 4 H(+) = [[Fe-S] cluster scaffold protein] + N(6)-[(R)-dihydrolipoyl]-L-lysyl-[protein] + 4 Fe(3+) + 2 hydrogen sulfide + 2 5'-deoxyadenosine + 2 L-methionine + 2 reduced [2Fe-2S]-[ferredoxin]. Its pathway is protein modification; protein lipoylation via endogenous pathway; protein N(6)-(lipoyl)lysine from octanoyl-[acyl-carrier-protein]: step 2/2. Catalyzes the radical-mediated insertion of two sulfur atoms into the C-6 and C-8 positions of the octanoyl moiety bound to the lipoyl domains of lipoate-dependent enzymes, thereby converting the octanoylated domains into lipoylated derivatives. The polypeptide is Lipoyl synthase (Aliivibrio fischeri (strain ATCC 700601 / ES114) (Vibrio fischeri)).